The sequence spans 304 residues: Energy-coupling factor transporter ATP-binding protein EcfA2 (304 aa).

The region spanning 3 to 261 (IIVKNISYIY…EKFLVENKLK (259 aa)) is the ABC transporter domain. Residue 40-47 (GSTGSGKT) participates in ATP binding.

This sequence belongs to the ABC transporter superfamily. Energy-coupling factor EcfA family. In terms of assembly, forms a stable energy-coupling factor (ECF) transporter complex composed of 2 membrane-embedded substrate-binding proteins (S component), 2 ATP-binding proteins (A component) and 2 transmembrane proteins (T component).

The protein resides in the cell membrane. Functionally, ATP-binding (A) component of a common energy-coupling factor (ECF) ABC-transporter complex. Unlike classic ABC transporters this ECF transporter provides the energy necessary to transport a number of different substrates. This chain is Energy-coupling factor transporter ATP-binding protein EcfA2, found in Mycoplasmopsis pulmonis (strain UAB CTIP) (Mycoplasma pulmonis).